The sequence spans 249 residues: Phosphoribosylaminoimidazole-succinocarboxamide synthase (249 aa).

It belongs to the SAICAR synthetase family.

The enzyme catalyses 5-amino-1-(5-phospho-D-ribosyl)imidazole-4-carboxylate + L-aspartate + ATP = (2S)-2-[5-amino-1-(5-phospho-beta-D-ribosyl)imidazole-4-carboxamido]succinate + ADP + phosphate + 2 H(+). Its pathway is purine metabolism; IMP biosynthesis via de novo pathway; 5-amino-1-(5-phospho-D-ribosyl)imidazole-4-carboxamide from 5-amino-1-(5-phospho-D-ribosyl)imidazole-4-carboxylate: step 1/2. The polypeptide is Phosphoribosylaminoimidazole-succinocarboxamide synthase (Roseiflexus sp. (strain RS-1)).